Here is a 379-residue protein sequence, read N- to C-terminus: Alanine racemase (379 aa).

The active-site Proton acceptor; specific for D-alanine is K37. The residue at position 37 (K37) is an N6-(pyridoxal phosphate)lysine. R137 contacts substrate. Catalysis depends on Y269, which acts as the Proton acceptor; specific for L-alanine. Residue M317 coordinates substrate.

Belongs to the alanine racemase family. Pyridoxal 5'-phosphate is required as a cofactor.

The catalysed reaction is L-alanine = D-alanine. The protein operates within amino-acid biosynthesis; D-alanine biosynthesis; D-alanine from L-alanine: step 1/1. In terms of biological role, catalyzes the interconversion of L-alanine and D-alanine. May also act on other amino acids. This chain is Alanine racemase (alr), found in Geobacter sp. (strain M21).